The chain runs to 430 residues: MALLHSGRVLPGIAAAFHPGLAAAASARASSWWTHVEMGPPDPILGVTEAFKRDTNSKKMNLGVGAYRDDNGKPYVLPSVRKAEAQIAAKNLDKEYLPIGGLAEFCKASAELALGENSEVLKSGRFVTVQTISGTGALRIGASFLQRFFKFSRDVFLPKPTWGNHTPIFRDAGMQLQGYRYYDPKTCGFDFTGAVEDISKIPEQSVLLLHACAHNPTGVDPRPEQWKEIATVVKKRNLFAFFDMAYQGFASGDGDKDAWAVRHFIEQGINVCLCQSYAKNMGLYGERVGAFTMVCKDADEAKRVESQLKILIRPMYSNPPLNGARIAAAILNTPDLRKQWLQEVKVMADRIIGMRTQLVSNLKKEGSTHNWQHITDQIGMFCFTGLKPEQVERLIKEFSIYMTKDGRISVAGVTSSNVGYLAHAIHQVTK.

A mitochondrion-targeting transit peptide spans 1–29 (MALLHSGRVLPGIAAAFHPGLAAAASARA). Thr48 carries the phosphothreonine modification. Lys59 bears the N6-acetyllysine mark. Gly65 provides a ligand contact to substrate. Lys73 is modified (N6-acetyllysine; alternate). The residue at position 73 (Lys73) is an N6-succinyllysine; alternate. Lys82 is subject to N6-acetyllysine. Lys90 is modified (N6-acetyllysine; alternate). Lys90 bears the N6-succinyllysine; alternate mark. Tyr96 carries the 3'-nitrotyrosine; alternate modification. Residue Tyr96 is modified to Phosphotyrosine; alternate. Residues Lys107 and Lys122 each carry the N6-acetyllysine; alternate modification. An N6-succinyllysine; alternate mark is found at Lys107 and Lys122. Ser143 carries the phosphoserine modification. Lys159 carries the N6-acetyllysine; alternate modification. N6-succinyllysine; alternate is present on Lys159. Residue Trp162 coordinates substrate. At Lys185 the chain carries N6-acetyllysine; alternate. Position 185 is an N6-succinyllysine; alternate (Lys185). Position 215 (Asn215) interacts with substrate. Residue Lys227 is modified to N6-succinyllysine. An N6-acetyllysine modification is found at Lys234. Lys279 and Lys296 each carry N6-acetyllysine; alternate. At Lys279 the chain carries N6-(pyridoxal phosphate)lysine; alternate. Position 296 is an N6-succinyllysine; alternate (Lys296). N6-acetyllysine is present on Lys302. Lys309 is modified (N6-acetyllysine; alternate). An N6-succinyllysine; alternate modification is found at Lys309. The residue at position 313 (Arg313) is an Asymmetric dimethylarginine. Thr333 bears the Phosphothreonine mark. Lys338 carries the N6-acetyllysine; alternate modification. Lys338 is subject to N6-succinyllysine; alternate. At Lys345 the chain carries N6-acetyllysine. N6-acetyllysine; alternate is present on Lys363. Position 363 is an N6-succinyllysine; alternate (Lys363). Residues Lys364 and Lys387 each carry the N6-acetyllysine modification. 2 positions are modified to N6-acetyllysine; alternate: Lys396 and Lys404. N6-succinyllysine; alternate is present on residues Lys396 and Lys404. Arg407 contacts substrate.

Belongs to the class-I pyridoxal-phosphate-dependent aminotransferase family. Homodimer. It depends on pyridoxal 5'-phosphate as a cofactor.

It is found in the mitochondrion matrix. It localises to the cell membrane. The catalysed reaction is L-aspartate + 2-oxoglutarate = oxaloacetate + L-glutamate. The enzyme catalyses L-kynurenine + 2-oxoglutarate = kynurenate + L-glutamate + H2O. Its function is as follows. Catalyzes the irreversible transamination of the L-tryptophan metabolite L-kynurenine to form kynurenic acid (KA). As a member of the malate-aspartate shuttle, it has a key role in the intracellular NAD(H) redox balance. Is important for metabolite exchange between mitochondria and cytosol, and for amino acid metabolism. Facilitates cellular uptake of long-chain free fatty acids. This chain is Aspartate aminotransferase, mitochondrial, found in Homo sapiens (Human).